The primary structure comprises 1170 residues: Putative DNA topoisomerase 2, mitochondrial (1170 aa).

ATP contacts are provided by residues Asn106, Asn135, 163–165 (SSN), 176–183 (GRNGYGAK), and 396–398 (QTK). The Toprim domain maps to 475–590 (CTLILTEGDS…SLVHTDGFIQ (116 aa)). Residues Glu481, Asp559, and Asp561 each coordinate Mg(2+). Positions 722–1157 (IPSLIDGLKP…DWKSVWRSEL (436 aa)) constitute a Topo IIA-type catalytic domain. The active-site O-(5'-phospho-DNA)-tyrosine intermediate is Tyr813.

The protein belongs to the type II topoisomerase family. In terms of assembly, homodimer. Mg(2+) is required as a cofactor. The cofactor is Mn(2+). It depends on Ca(2+) as a cofactor.

It is found in the mitochondrion. It carries out the reaction ATP-dependent breakage, passage and rejoining of double-stranded DNA.. Functionally, control of topological states of DNA by transient breakage and subsequent rejoining of DNA strands. Topoisomerase II makes double-strand breaks. The protein is Putative DNA topoisomerase 2, mitochondrial of Caenorhabditis elegans.